The sequence spans 441 residues: Serum response factor-binding protein 1 (441 aa).

2 coiled-coil regions span residues 52–77 and 118–140; these read KGTEDALLKNQRRAQRLLEEIHAMKE and LLKKKIDVLKDAVQAFKDARQSA. Disordered stretches follow at residues 137 to 342, 357 to 389, and 406 to 441; these read RQSA…RNDK, FHSLAGPKSSRRDPREQAPKNKAPDFPENEPPV, and QTMQAPLHPSWEASRRRKEQQSKIAVFQGKKITFDD. The segment covering 139-152 has biased composition (low complexity); the sequence is SAPAAESSESTSGE. Positions 153 to 183 are enriched in basic and acidic residues; the sequence is GRCKDIARSKDDARESQHPERTVVREQKAKD. Residue Lys-201 forms a Glycyl lysine isopeptide (Lys-Gly) (interchain with G-Cter in SUMO2) linkage. Residue Ser-214 is modified to Phosphoserine. Over residues 237 to 246 the composition is skewed to polar residues; that stretch reads DSNQGKASTK. Positions 269-282 are enriched in basic and acidic residues; it reads EKEYFDDSTEERFY. Phosphoserine occurs at positions 276, 291, and 293. A compositionally biased stretch (basic and acidic residues) spans 308–321; that stretch reads KESGVHSSAKELKP. A Glycyl lysine isopeptide (Lys-Gly) (interchain with G-Cter in SUMO2) cross-link involves residue Lys-328. Positions 366–381 are enriched in basic and acidic residues; the sequence is SRRDPREQAPKNKAPD.

Interacts with SRF. Forms complexes with SRF and SRF cofactors ARID2, MYOCD and NKX2-5. Interacts with the N-terminus of SLC2A4. Highly expressed in heart, skeletal muscle, liver, kidney, testis and brain. Also expressed in white adipose tissue. Expression is up-regulated in cardiomyopathic heart.

It is found in the cytoplasm. The protein resides in the perinuclear region. May be involved in regulating transcriptional activation of cardiac genes during the aging process. May play a role in biosynthesis and/or processing of SLC2A4 in adipose cells. In Mus musculus (Mouse), this protein is Serum response factor-binding protein 1.